The sequence spans 450 residues: ATP-dependent protease ATPase subunit HslU (450 aa).

ATP-binding positions include V29, G71–E76, D261, E328, and R400.

The protein belongs to the ClpX chaperone family. HslU subfamily. In terms of assembly, a double ring-shaped homohexamer of HslV is capped on each side by a ring-shaped HslU homohexamer. The assembly of the HslU/HslV complex is dependent on binding of ATP.

The protein localises to the cytoplasm. Functionally, ATPase subunit of a proteasome-like degradation complex; this subunit has chaperone activity. The binding of ATP and its subsequent hydrolysis by HslU are essential for unfolding of protein substrates subsequently hydrolyzed by HslV. HslU recognizes the N-terminal part of its protein substrates and unfolds these before they are guided to HslV for hydrolysis. This is ATP-dependent protease ATPase subunit HslU from Rickettsia felis (strain ATCC VR-1525 / URRWXCal2) (Rickettsia azadi).